The following is a 65-amino-acid chain: DNA-directed RNA polymerase subunit Rpo10 (65 aa).

Zn(2+) contacts are provided by cysteine 7, cysteine 10, cysteine 44, and cysteine 45.

It belongs to the archaeal Rpo10/eukaryotic RPB10 RNA polymerase subunit family. Part of the RNA polymerase complex. The cofactor is Zn(2+).

The protein resides in the cytoplasm. The enzyme catalyses RNA(n) + a ribonucleoside 5'-triphosphate = RNA(n+1) + diphosphate. DNA-dependent RNA polymerase (RNAP) catalyzes the transcription of DNA into RNA using the four ribonucleoside triphosphates as substrates. This Pyrobaculum arsenaticum (strain DSM 13514 / JCM 11321 / PZ6) protein is DNA-directed RNA polymerase subunit Rpo10.